Here is a 104-residue protein sequence, read N- to C-terminus: MATKLKSAKSIVPLLDRILVQRIKADTKTASGIFLPEKSVEKLSEGRVISVGKGGYNKEGKLAQPSVAVGDRVLLPAYGGSNIKVGEEEYSLYRDHELLAIIKE.

Ser-81 is modified (phosphoserine).

This sequence belongs to the GroES chaperonin family. Homohexamer.

The protein resides in the mitochondrion matrix. Eukaryotic CPN10 homolog which is essential for mitochondrial protein biogenesis, together with CPN60. Binds to CPN60 in the presence of Mg-ATP and suppresses the ATPase activity of the latter. The chain is 10 kDa heat shock protein, mitochondrial (hsp10) from Schizosaccharomyces pombe (strain 972 / ATCC 24843) (Fission yeast).